We begin with the raw amino-acid sequence, 284 residues long: Tropomyosin (284 aa).

Residues Met-1 to Tyr-284 adopt a coiled-coil conformation. The span at Thr-110–Asn-142 shows a compositional bias: basic and acidic residues. The disordered stretch occupies residues Thr-110–Thr-143.

It belongs to the tropomyosin family.

Functionally, tropomyosin, in association with the troponin complex, plays a central role in the calcium dependent regulation of muscle contraction. The sequence is that of Tropomyosin from Anisakis simplex (Herring worm).